The sequence spans 350 residues: UDP-N-acetylglucosamine--N-acetylmuramyl-(pentapeptide) pyrophosphoryl-undecaprenol N-acetylglucosamine transferase (350 aa).

UDP-N-acetyl-alpha-D-glucosamine contacts are provided by residues T9–G11, N123, R159, S181, and Q281.

The protein belongs to the glycosyltransferase 28 family. MurG subfamily.

The protein localises to the cell inner membrane. It carries out the reaction di-trans,octa-cis-undecaprenyl diphospho-N-acetyl-alpha-D-muramoyl-L-alanyl-D-glutamyl-meso-2,6-diaminopimeloyl-D-alanyl-D-alanine + UDP-N-acetyl-alpha-D-glucosamine = di-trans,octa-cis-undecaprenyl diphospho-[N-acetyl-alpha-D-glucosaminyl-(1-&gt;4)]-N-acetyl-alpha-D-muramoyl-L-alanyl-D-glutamyl-meso-2,6-diaminopimeloyl-D-alanyl-D-alanine + UDP + H(+). It participates in cell wall biogenesis; peptidoglycan biosynthesis. Functionally, cell wall formation. Catalyzes the transfer of a GlcNAc subunit on undecaprenyl-pyrophosphoryl-MurNAc-pentapeptide (lipid intermediate I) to form undecaprenyl-pyrophosphoryl-MurNAc-(pentapeptide)GlcNAc (lipid intermediate II). The chain is UDP-N-acetylglucosamine--N-acetylmuramyl-(pentapeptide) pyrophosphoryl-undecaprenol N-acetylglucosamine transferase from Helicobacter hepaticus (strain ATCC 51449 / 3B1).